A 127-amino-acid polypeptide reads, in one-letter code: Protein chibby homolog 1 (127 aa).

Residues 1–25 (MPLFGSIFSPKKTPPRKSASLSNLH) form a disordered region. Phosphoserine occurs at positions 9 and 20. The minimal region for the interaction with PKD2 stretch occupies residues 60 to 112 (VADSVISGGVDRRETQRLRKRNQQLEEENNLLRLKVDILLDMLSETTAESHLK). Positions 68–110 (GVDRRETQRLRKRNQQLEEENNLLRLKVDILLDMLSETTAESH) form a coiled coil. The tract at residues 77–98 (LRKRNQQLEEENNLLRLKVDIL) is leucine-zipper; mediates homodimerization.

Belongs to the chibby family. In terms of assembly, homodimer. Homodimerization is essential for nuclear localization and interaction with KPNA4 but is dispensable for interaction with CTNNB1. Interacts with polycystin-2/PKD2 and GM130. Interacts with the C-terminal region of CTNNB1. Interacts (C-terminus) with TCIM (C-terminus), TCIM competes with CTNNB1 for the interaction with CBY1. Interacts with FAM92A; this interaction facilitates targeting of FAM92A to cilium basal body. Interacts with CIBAR2. Interacts with KPNA4.

The protein resides in the nucleus speckle. It localises to the cytoplasm. Its subcellular location is the cytoskeleton. The protein localises to the cilium basal body. It is found in the microtubule organizing center. The protein resides in the centrosome. It localises to the centriole. Its subcellular location is the golgi apparatus. The protein localises to the trans-Golgi network. It is found in the cell projection. The protein resides in the cilium. It localises to the flagellum. Its subcellular location is the nucleus. Its function is as follows. Inhibits the Wnt/Wingless pathway by binding to CTNNB1/beta-catenin and inhibiting beta-catenin-mediated transcriptional activation through competition with TCF/LEF transcription factors. Has also been shown to play a role in regulating the intracellular trafficking of polycystin-2/PKD2 and possibly of other intracellular proteins. Promotes adipocyte and cardiomyocyte differentiation. This chain is Protein chibby homolog 1 (Cby1), found in Rattus norvegicus (Rat).